Reading from the N-terminus, the 465-residue chain is MVMEKPSPLLVGREFVRQYYTLLNQAPDMLHRFYGKNSSYVHGGLDSNGKPADAVYGQKEIHRKVMSQNFTNCHTKIRHVDAHATLNDGVVVQVMGLLSNNNQALRRFMQTFVLAPEGSVANKFYVHNDIFRYQDEVFGGFITEPQEESEEEVEEPEERQQTPEVVPDDSGTFYDQTVSNDLEEHLEEPVAEPEPEPEPEPEQEPVSEVQEEKSEPVLEETAPEDVQKSSSPAPADIAQTVQEDLRTFSWASVTSKNLPPSGAVPVTGIPPHVVKVPASQPRPESKPESQIPLQRPQRDQRVREQRINVPPQRGPRPVREAGEQGDVEPRRIVRHPDSHQLFIGNLPHEVDKSELKDFFQNYGNVVELRINSGGKLPNFGFVVFDDSEPVQKVLSNRPIMFRGEVRLNVEEKKTRAAREGDRRDNRLRGPGGPRGGLGGGMRGPPRGGMVQKPGFGVGRSIAPRQ.

The 123-residue stretch at 11–133 (VGREFVRQYY…FYVHNDIFRY (123 aa)) folds into the NTF2 domain. Residues Lys36, Lys50, Lys59, Lys64, Lys76, and Lys123 each participate in a glycyl lysine isopeptide (Lys-Gly) (interchain with G-Cter in ubiquitin) cross-link. The segment at 142–224 (ITEPQEESEE…EPVLEETAPE (83 aa)) is acidic disordered region. Thr143 is subject to Phosphothreonine. Composition is skewed to acidic residues over residues 145–157 (PQEESEEEVEEPE) and 184–205 (EHLEEPVAEPEPEPEPEPEQEP). A disordered region spans residues 145–242 (PQEESEEEVE…APADIAQTVQ (98 aa)). Ser149 carries the phosphoserine modification. A phosphoserine mark is found at Ser230, Ser231, Ser249, and Ser252. The interval 254-326 (TSKNLPPSGA…PVREAGEQGD (73 aa)) is disordered. Composition is skewed to basic and acidic residues over residues 296–306 (PQRDQRVREQR) and 317–326 (PVREAGEQGD). The region spanning 339–414 (HQLFIGNLPH…VRLNVEEKKT (76 aa)) is the RRM domain. Residues Lys352 and Lys356 each participate in a glycyl lysine isopeptide (Lys-Gly) (interchain with G-Cter in ubiquitin) cross-link. Ser372 is modified (phosphoserine). Lys375 is covalently cross-linked (Glycyl lysine isopeptide (Lys-Gly) (interchain with G-Cter in ubiquitin)). Residue Lys375 is modified to N6-acetyllysine; alternate. Residue Lys375 forms a Glycyl lysine isopeptide (Lys-Gly) (interchain with G-Cter in SUMO2); alternate linkage. Lys392 participates in a covalent cross-link: Glycyl lysine isopeptide (Lys-Gly) (interchain with G-Cter in ubiquitin); alternate. The tract at residues 409–465 (VEEKKTRAAREGDRRDNRLRGPGGPRGGLGGGMRGPPRGGMVQKPGFGVGRSIAPRQ) is RG-rich region. Over residues 412-427 (KKTRAAREGDRRDNRL) the composition is skewed to basic and acidic residues. A disordered region spans residues 412-465 (KKTRAAREGDRRDNRLRGPGGPRGGLGGGMRGPPRGGMVQKPGFGVGRSIAPRQ). Position 428 is an asymmetric dimethylarginine (Arg428). Over residues 429–446 (GPGGPRGGLGGGMRGPPR) the composition is skewed to gly residues. Asymmetric dimethylarginine; alternate is present on Arg434. Arg434, Arg446, Arg459, and Arg464 each carry omega-N-methylarginine; alternate. Arg459 is subject to Dimethylated arginine; alternate.

Homodimer and oligomer. Component of a TAU mRNP complex, at least composed of IGF2BP1, ELAVL4 and G3BP1. Binds to the SH3 domain of Ras GTPase-activating protein (RASA1) in proliferating cells. No interaction in quiescent cells. Interacts (via NTF2 domain) with USP10; inhibiting stress granule formation by lowering G3BP1 valence. Interacts (via NTF2 domain) with CAPRIN1; promoting stress granule formation by lowering the saturation-concentration of G3BP1. Interacts (via NTF2 domain) with UBAP2L; promoting stress granule formation. Associates (via RG-rich region) with 40S ribosome subunits. Interacts with RPTOR and SPAG5; this complex is increased by oxidative stress. Interacts with ATXN2L. Interacts with STYXL1. Interacts with CGAS (via N-terminus); this interaction promotes the DNA-binding and activation of CGAS. Interacts (via C-terminus) with RIGI. Interacts with PABPC1. Interacts with QKI (isoforms QKI6 and QKI7); directing N(7)-methylguanine-containing mRNAs to stress granules. Mg(2+) is required as a cofactor. In terms of processing, phosphorylation of the acidic disordered region regulates stress granule assembly. RASA1-dependent phosphorylation of Ser-149 induces a conformational change that prevents self-association. Dephosphorylation after HRAS activation is required for stress granule assembly. Ser-149 phosphorylation induces partial nuclear localization. Post-translationally, arg-435 is dimethylated, probably to asymmetric dimethylarginine. Ubiquitinated by TRIM21 via 'Lys-63'-linked polyubiquitination in the NTF2 domain in response to heat shock, leading to stress granule disassembly: ubiquitination promotes interaction with the FAF2 adapter, followed by interaction with VCP, which extracts G3BP1 from stress granules, leading to stress granule disassembly. In case of prolonged stress, ubiquitination by TRIM21 leads to autophagy-dependent degradation of G3BP1 via recruitment of ubiquitinated G3BP1 by SQSTM1 and/or CALCOCO2 to autophagosomes.

It localises to the cytoplasm. Its subcellular location is the cytosol. It is found in the perikaryon. The protein localises to the stress granule. The protein resides in the nucleus. The enzyme catalyses ATP + H2O = ADP + phosphate + H(+). Under physiological conditions, G3BP1 adopts a compact state that is stabilized by intramolecular interactions between the RG-rich and the acidic regions that inhibit phase separation. Upon stress, polysomes disassemble and mRNAs are released in an unfolded protein-free state. Binding of unfolded mRNA to G3BP1 outcompetes the intramolecular interactions and RNA-bound G3BP1 adopts an expanded conformation in which the RG-rich region becomes exposed to engage in protein-protein and protein-RNA interactions, allowing physical cross-linking of RNA molecules to form protein-RNA condensates, leading to liquid-liquid phase separation (LLPS). In terms of biological role, protein involved in various processes, such as stress granule formation and innate immunity. Plays an essential role in stress granule formation. Stress granules are membraneless compartments that store mRNAs and proteins, such as stalled translation pre-initiation complexes, in response to stress. Promotes formation of stress granules phase-separated membraneless compartment by undergoing liquid-liquid phase separation (LLPS) upon unfolded RNA-binding: functions as a molecular switch that triggers RNA-dependent LLPS in response to a rise in intracellular free RNA concentrations. Also acts as an ATP- and magnesium-dependent helicase: unwinds DNA/DNA, RNA/DNA, and RNA/RNA substrates with comparable efficiency. Acts unidirectionally by moving in the 5' to 3' direction along the bound single-stranded DNA. Unwinds preferentially partial DNA and RNA duplexes having a 17 bp annealed portion and either a hanging 3' tail or hanging tails at both 5'- and 3'-ends. Plays an essential role in innate immunity by promoting CGAS and RIGI activity. Participates in the DNA-triggered cGAS/STING pathway by promoting the DNA binding and activation of CGAS. Triggers the condensation of cGAS, a process probably linked to the formation of membrane-less organelles. Also enhances RIGI-induced type I interferon production probably by helping RIGI at sensing pathogenic RNA. May also act as a phosphorylation-dependent sequence-specific endoribonuclease in vitro: Cleaves exclusively between cytosine and adenine and cleaves MYC mRNA preferentially at the 3'-UTR. The sequence is that of Ras GTPase-activating protein-binding protein 1 (G3BP1) from Bos taurus (Bovine).